The sequence spans 178 residues: Redox-sensing transcriptional repressor Rex (178 aa).

59 to 64 (GVGNMG) is an NAD(+) binding site.

Belongs to the transcriptional regulatory Rex family. As to quaternary structure, homodimer.

It localises to the cytoplasm. In terms of biological role, modulates transcription in response to changes in cellular NADH/NAD(+) redox state. The sequence is that of Redox-sensing transcriptional repressor Rex from Streptococcus suis.